Here is a 685-residue protein sequence, read N- to C-terminus: Mannan-binding lectin serine protease 2 (685 aa).

The N-terminal stretch at 1–19 is a signal peptide; sequence MRLLIVLGLLWSLVATLLG. Positions 20-137 constitute a CUB 1 domain; that stretch reads SKWPEPVFGR…TGFEAFYAAE (118 aa). 2 residues coordinate Ca(2+): Glu67 and Asp75. A disulfide bridge connects residues Cys72 and Cys90. Asn103 carries N-linked (GlcNAc...) asparagine glycosylation. Ca(2+)-binding residues include Asp120, Ser122, Asn123, Asp138, and Val139. The region spanning 138–181 is the EGF-like; calcium-binding domain; the sequence is DVDECRTSLGDSVPCDHYCHNYLGGYYCSCRVGYILHQNKHTCS. Cystine bridges form between Cys152/Cys165, Cys167/Cys180, Cys184/Cys211, and Cys241/Cys259. Asn158 carries the post-translational modification (3R)-3-hydroxyasparagine. Ca(2+) contacts are provided by Tyr159 and Gly162. Positions 184–296 constitute a CUB 2 domain; sequence CSGQVFTGRS…TGWKIHYTST (113 aa). The N-linked (GlcNAc...) asparagine glycan is linked to Asn285. Sushi domains lie at 298–363 and 364–431; these read QPCP…ECSI and IDCG…VCKP. Intrachain disulfides connect Cys300–Cys348, Cys328–Cys361, Cys366–Cys411, Cys396–Cys429, Cys433–Cys551, Cys597–Cys617, and Cys628–Cys659. Residues 444–683 enclose the Peptidase S1 domain; it reads IIGGQPAKPG…YIPWIENIIN (240 aa). Residues His482 and Asp531 each act as charge relay system in the active site. The active-site Charge relay system is the Ser632. N-linked (GlcNAc...) asparagine glycosylation occurs at Asn641.

This sequence belongs to the peptidase S1 family. In terms of assembly, homodimer; disulfide-linked. Binds MBL2. Isoform 2 binds to MASP1. Binds SERPING1. N-glycosylated. Post-translationally, the iron and 2-oxoglutarate dependent 3-hydroxylation of aspartate and asparagine is (R) stereospecific within EGF domains. Highly expressed in liver. Secreted in plasma.

It is found in the secreted. It catalyses the reaction Selective cleavage after Arg-223 in complement component C2 (-Ser-Leu-Gly-Arg-|-Lys-Ile-Gln-Ile) and after Arg-76 in complement component C4 (-Gly-Leu-Gln-Arg-|-Ala-Leu-Glu-Ile).. Its function is as follows. Serum protease that plays an important role in the activation of the complement system via mannose-binding lectin. After activation by auto-catalytic cleavage it cleaves C2 and C4, leading to their activation and to the formation of C3 convertase. This is Mannan-binding lectin serine protease 2 (Masp2) from Rattus norvegicus (Rat).